The primary structure comprises 1193 residues: K(+) efflux antiporter 1, chloroplastic (1193 aa).

A chloroplast-targeting transit peptide spans 1–49; it reads MEYASTFQRPILFHGGDGASYCFPNRLISPKGISITSGDSKVHSCFRLR. The Stromal segment spans residues 50–585; that stretch reads RNVAQSGTLN…MIPHQEVNEE (536 aa). The disordered stretch occupies residues 103 to 135; that stretch reads SLGNADSNDHRIGESSESSDETEATDLKDARVE. Positions 131-355 form a coiled coil; sequence DARVENDTDS…RAEKSLSISQ (225 aa). Lys168 carries the N6-acetyllysine; by NSI modification. Over residues 351-364 the composition is skewed to polar residues; that stretch reads LSISQTPEETQGQL. 2 disordered regions span residues 351–372 and 421–474; these read LSISQTPEETQGQLSDEETSQE and QPYE…NSPK. Positions 439–465 are enriched in basic and acidic residues; the sequence is KVVEADSEKPKINVQTKKQETQKDLPK. Residues 586-606 traverse the membrane as a helical segment; that stretch reads EASLFDFLWLLLASVIFVPLF. The Chloroplast intermembrane segment spans residues 607–612; it reads QKIPGG. The chain crosses the membrane as a helical span at residues 613 to 633; sequence SPVLGYLAAGILIGPYGLSII. At 634 to 640 the chain is on the stromal side; it reads RNVHGTR. A helical transmembrane segment spans residues 641-661; that stretch reads AIAEFGVVFLLFNIGLELSVE. Topologically, residues 662–668 are chloroplast intermembrane; it reads RLSSMKK. The chain crosses the membrane as a helical span at residues 669-689; sequence YVFGLGSAQVLVTAAVVGLLA. The Stromal portion of the chain corresponds to 690 to 698; that stretch reads HYVAGQAGP. The helical transmembrane segment at 699-719 threads the bilayer; sequence AAIVIGNGLALSSTAVVLQVL. At 720–733 the chain is on the chloroplast intermembrane side; that stretch reads QERGESTSRHGRAS. The chain crosses the membrane as a helical span at residues 734–754; the sequence is FSVLLFQDLAVVVLLILIPLI. The Stromal portion of the chain corresponds to 755-766; that stretch reads SPNSSKGGIGFQ. Residues 767 to 787 traverse the membrane as a helical segment; the sequence is AIAEALGLAAVKAAVAITAII. At 788 to 827 the chain is on the chloroplast intermembrane side; sequence AGGRLLLRPIYKQIAENRNAEIFSANTLLVILGTSLLTAR. Residues 828 to 848 form a helical membrane-spanning segment; it reads AGLSMALGAFLAGLLLAETEF. At 849 to 860 the chain is on the stromal side; it reads SLQVESDIAPYR. The chain crosses the membrane as a helical span at residues 861 to 881; it reads GLLLGLFFMTVGMSIDPKLLL. Over 882–883 the chain is Chloroplast intermembrane; the sequence is SN. The chain crosses the membrane as a helical span at residues 884-904; the sequence is FPVIVGTLGLLIVGKTMLVVI. At 905–912 the chain is on the stromal side; that stretch reads MGKLFGIS. A helical transmembrane segment spans residues 913–933; it reads IISAIRVGLLLAPGGEFAFVA. The Chloroplast intermembrane portion of the chain corresponds to 934-948; it reads FGEAVNQGIMSPQLS. A helical membrane pass occupies residues 949–969; it reads SLLFLVVGISMAITPWLAAGG. The Stromal portion of the chain corresponds to 970–1193; sequence QLIASRFELH…QIIEGGTVVI (224 aa). In terms of domain architecture, RCK N-terminal spans 995–1112; the sequence is QGHIIICGFG…EKAGATAVVP (118 aa). The tract at residues 1165–1184 is disordered; that stretch reads GYSRTSKPKPQPSDASGDNQ.

It belongs to the monovalent cation:proton antiporter 2 (CPA2) transporter (TC 2.A.37) family. KEA (TC 2.A.37.1) subfamily. Acetylated at Lys-168 by the stromal acetyltransferase enzyme NSI. Expressed in shoots and roots. Mainly localized to leaf veins, hypocotyls, mesophylls and guard cells. Accumulates at high levels in small and dividing plastids (at protein level).

The protein localises to the plastid. Its subcellular location is the chloroplast inner membrane. The catalysed reaction is K(+)(in) + H(+)(out) = K(+)(out) + H(+)(in). Its activity is regulated as follows. Repressed by sodium ions Na(+). Its function is as follows. Electroneutral K(+)/H(+) efflux antiporter involved in chloroplastic K(+) homeostasis and osmotic adjustment, especially during plastid division and thylakoid membrane formation. Collaboratively with KEA2, adjusts alkaline stromal pH upon light to dark transitions in plastids. Together with KEA2, critical for chloroplast development, including chloroplast RNA-metabolism (e.g. rRNA maturation, polysome loading and RNA-protein interactions) and plastid gene expression (PGE), ion homeostasis, and photosynthesis. Contributes, during early seedling development, to the regulation of photosynthesis and abscisic acid- (ABA-) mediated primary root growth in a sucrose-dependent manner. Involved in the regulation of reactive oxygen and nitrogen species (ROS and RNS) metabolism. Required in roots for rapid hyperosmotic-induced Ca(2+) responses and for osmo-sensory potentiation in hyperosmotic conditions. May counteract resilience to drought and salt stress, involving photorespiratory pathway and stomata closure. This is K(+) efflux antiporter 1, chloroplastic from Arabidopsis thaliana (Mouse-ear cress).